The sequence spans 191 residues: Fe/S biogenesis protein NfuA (191 aa).

Residues cysteine 149 and cysteine 152 each contribute to the [4Fe-4S] cluster site.

Belongs to the NfuA family. Homodimer. The cofactor is [4Fe-4S] cluster.

Functionally, involved in iron-sulfur cluster biogenesis. Binds a 4Fe-4S cluster, can transfer this cluster to apoproteins, and thereby intervenes in the maturation of Fe/S proteins. Could also act as a scaffold/chaperone for damaged Fe/S proteins. In Buchnera aphidicola subsp. Baizongia pistaciae (strain Bp), this protein is Fe/S biogenesis protein NfuA.